A 168-amino-acid polypeptide reads, in one-letter code: Peptide deformylase 1 (168 aa).

Positions 91 and 133 each coordinate Fe cation. The active site involves Glu134. His137 is a binding site for Fe cation.

Belongs to the polypeptide deformylase family. It depends on Fe(2+) as a cofactor.

The catalysed reaction is N-terminal N-formyl-L-methionyl-[peptide] + H2O = N-terminal L-methionyl-[peptide] + formate. Functionally, removes the formyl group from the N-terminal Met of newly synthesized proteins. Requires at least a dipeptide for an efficient rate of reaction. N-terminal L-methionine is a prerequisite for activity but the enzyme has broad specificity at other positions. In Vibrio vulnificus (strain YJ016), this protein is Peptide deformylase 1.